The following is a 308-amino-acid chain: PAK4-inhibitor inka1 (308 aa).

The disordered stretch occupies residues 81–105; that stretch reads EEEESASDPSAVSSPSSERSLEFDS. Over residues 87–98 the composition is skewed to low complexity; the sequence is SDPSAVSSPSSE. Inka box regions lie at residues 164–201 and 281–308; these read DPEDWTTSLLTRGRNRQPLVLGDNSFADLIHNWMDLPE and DTDYYQFSALMKSGSRTPIVCNDIIGYI.

The protein belongs to the INKA family. Interacts with pak4/pak5.

It is found in the nucleus. The protein localises to the cytoplasm. Inhibitor of the serine/threonine-protein kinase pak4/pak5. Acts by binding pak4/pak5 in a substrate-like manner, inhibiting the protein kinase activity. Required for the proper migration of neural crest cells during embryonic development, probably by inhibiting pak4/pak5. The sequence is that of PAK4-inhibitor inka1 from Danio rerio (Zebrafish).